Consider the following 243-residue polypeptide: Anti-H(O) lectin 2 (243 aa).

Residue Asn115 is glycosylated (N-linked (GlcNAc...) asparagine). Mn(2+) is bound by residues Glu127 and Asp129. Positions 129, 136, and 139 each coordinate Ca(2+). Mn(2+) contacts are provided by Asp139 and His144.

It belongs to the leguminous lectin family. In terms of assembly, homodimer.

Lactose- or galactose-binding anti-H(O) lectin. The sequence is that of Anti-H(O) lectin 2 from Cytisophyllum sessilifolium (Sessile-leaved cytisus).